Consider the following 152-residue polypeptide: Nucleoside diphosphate kinase A 2 (152 aa).

6 residues coordinate ATP: lysine 12, phenylalanine 60, arginine 88, threonine 94, arginine 105, and asparagine 115. Catalysis depends on histidine 118, which acts as the Pros-phosphohistidine intermediate.

The protein belongs to the NDK family. Homohexamer. The cofactor is Mg(2+). Post-translationally, the N-terminus is blocked.

The protein resides in the cytoplasm. Its subcellular location is the cell membrane. The protein localises to the nucleus. The catalysed reaction is a 2'-deoxyribonucleoside 5'-diphosphate + ATP = a 2'-deoxyribonucleoside 5'-triphosphate + ADP. It carries out the reaction a ribonucleoside 5'-diphosphate + ATP = a ribonucleoside 5'-triphosphate + ADP. Autophosphorylation at His-118 increases serine/threonine protein kinase activity of the enzyme. Interaction with the SET complex inhibits exonuclease activity. Its function is as follows. Major role in the synthesis of nucleoside triphosphates other than ATP. Possesses nucleoside-diphosphate kinase, serine/threonine-specific protein kinase, geranyl and farnesyl pyrophosphate kinase, histidine protein kinase and 3'-5' exonuclease activities. Involved in cell proliferation, differentiation and development, signal transduction, G protein-coupled receptor endocytosis, and gene expression. Required for neural development including neural patterning and cell fate determination. This Bos taurus (Bovine) protein is Nucleoside diphosphate kinase A 2 (NME1-2).